The chain runs to 3848 residues: MVSHIAASVLTKYLGDYVDDLNKDNIKLSFLSGEAVLQDLKIKKTVLQSFLPNVIVKQAIIKKLSLHVPWKDLKGKPAIIKIEGIYVLAETSVEFDEQYYKKKFQDEKQAKLHIQEVLRLNKQQLKNPHQSTTTTTTTSDESNTFGSKLLQTVVDNLQLYIDSVHIRFEDSVNRRSFSFGVTLNSLVAESTDQTWNPTFIKNESTIIHKLINLNQLSIYWNSNSPKLKYTNIDDLSQKLKSMIKKEDSGKQQQQQQQQQGEEQDDEIEEDYFLSTESRKQQYIIDPISAKLKVVINKSIIPSEVIPKYNLNFEFDKTDISLSDYQYKDITGILESFKLFEKSIEFRSARPINTTIKQSPRKWWNYAIQCVLQKVHQKRYTQSWSYIKEFLSDKRDYIELFKKLKKKTIHQTEQTRLDSLEWKLPFDQILFFRNLSFKIIEKEEKLEKERLKLQQQQQQQQQNLNKISPTTTTTPSTSTGGGGWLSSWWKPIVNTSVPITAATTTTTATNTDSTITKLKDIKLSKDDWNEIYDTIGYDENDDIINSNVASLQQPKQFGKDFSNIIKTVINFRLVQGGLKLKKKRRTIALLQLNDISLSLKSKINSSFVFNGNLKGLELIDQSTFNTQFPKLISPLLKRNSSSIPTKIISQPPIFNITLESHSLSSTITSSTTTATTTQSTSTNSNNNNNIKVNYSLSIQSKPLTIVYYPKFISTVNDFFFKKEDDQDVQDMVLEDLEKKAQETIESIKAQTRDKLLLAISNKTTFSIDMDLEAPIILVPESITNKNTNLLILDLGKLLINHYPKQQQLQQQLQQLQQEQGQEQEQEQKQEQKQEQEQKDWKEEFYDEYLFKLINTQVLLANLKNDWRDIEQVKKFRMNIANPLNANFTLKISKLNNRQLLTSLKLMASIDLLEFYLSSCQYVNLVNIIQSVTQPIDQQQQLIGSESMYMSAFDYSSVYQSNIFKQPQQLQPQQKQQSPPLISSPPLIKKKKSYSKEFIDSYKMFEASFNIDKFNIHLRLDNYDSSGSSSNNDSSNTTTTNHNQLVSHNVALVYLRCLHGTYVQKLFDTNLELLIKGMWIEDCFQKPQSIAHGSGGDYLATTTNRFKPNDVNIGGGSNENLIKFKIQQISSDSPFYNNIDKLLDIELSQINLILNRKTVAGLIEFSNSVSNLSILKNNQNNNQNNNQNNNQNINESSPTVFITSPPPPPPPPLNHQSNNNSQYDTLSSSTYLIRNSNNKILPPIQQISTTANNNIKIQTKATIKIDLVRILLTRENNNPLIKASFTGFNCTTDQYNYKTIMNGKLGSLKIYDMTTEGRNYRTILTTRERKLNNKTSPTTPSSSGVSTGTTFDIDIDNFDTVSSSSSSSLLSSSSLLISPPGGEQSSLVYFQFESRNDNNSQMLKINLSSIRFIFLKRFTEELRLFLNNVNMMREYLKSSIYSAATVISQNRSTLFYEIEIQNPYIVIPLSSLSNKIFIVDLGKINIKNQFEKIIPTSTGEIDMILMEPVIIENIIIEAQNIKLLSGLNSEIKKSENNNNNNNNSNTNQRSYGTMVSDVNVSINLKTPLFSELNLKQYLEQCMKLQSWEKHFTISQFELNVSEYELKSLIELLDGNLSEFSSEILNDANSSFDQQKQQEIEKLKLQQEIEDNNNDNEDEQVNKLLQLIKEQVGYTYCKLGKFSIMFMKRDGTDIDDRLVLFYVSEAKMDIIKEEMETSMNIEIKSVQMKDFSKETHPHLRNILTPLSLKSVNEKRQQKEQILPQIIIKGSIKPPPIQQSLFQISIDGMFMIFVPHSWIPVQDSIMKLSKFATEAWNRYTIKVYGEAPTNDEIIQSGLSLFSLSIKDIKISIPGDCTVNSGQGENEYSLFIRSSLDIQTTSRGAMGVETITLIDANNIQIYRNQLVDTNNENINNNNNNNLTTSTTTTTTTNKNQSNIKIIAPFKIVFQTTSTLLNSESSLSINNIVVTFSYQDFKLMMKIINSIIESNNQNLIQEKMKRNYLKKYRDPNECTSDDELEEQLQQLENDDYNDDNYNSNGNNNNNNSNNQLPVKEDSQLQKYLSISLEKGEFILNDDHKISSPIKLLSIGVDGLKSNIFSFPQKNQIALSLDANMKAGYFNKNIGIWEPLIENWGFSFTSNNSIEGGWMVNFNSKIPLYINITKIFIDTSISTYQIWADDYYSQQKKDKKNKSNDYDNDEIIEDTVEQVNNDLIKPADDQKNNNNNKNDNNNNNNNNNNNNNNNNNNNNNNNNNNNNNNNNNNNNNNNNNNKNNNDNNNNIKNNNNNENNNNKNLQEKEEIKYPYYIRNDTGVELWYWVRSDEIQKLPVGKEAGFNPKFSSSSSSSQQQQQQPLSPLLQTQQQIQLKPEELQQKIELERKISFQLFGDFQPIAKVPMDSIGTYTLYPMPEYKNIKLLYEISYRNGAKVLSLHSNFNIRNDTDIPVVVHITAIYNQIPRSIEILLNPHVKIPIPVEYTIGRIKYKPYNLGYDYSAERIDCSNVLQLFKSSKQKQKQLNNQLQQQSNNNNNNNNNNNNTNSNNSNLLGNLIGGNNNNNDLNIGKISSKMICKHGVKLPFVFLSSIEKNSLETKNTIEISINTAIMIENVLACDLQYRLYHGKNKKIIGSAFFSGVIPMGKKLPVLVYDSLQDIYMEFQIYDFQWSPLCLIDSMVGLAVTDKVKIEDRLHQPLLISFDNRIQPNGSRFVTLYCEYWLINQTGLPLYFRHHIGAQTIDPAGQTPTKQIETIHESTSMKPTDSRNWYTKEWNHPSQPFMFAYSDNSIVGGKFSLKIYDSNWSSPFSLISSQSSSNSNIEISEDRTDEEKEIKNVIGTITKRQPLKTNYNLSVSILPSNSKFWRTKVVTFSPMYLMVNSTRFRILYQQFDCDSNTQSIIQDQSLPFQFPSSRHEKLIRIGILDTSAISNNPYNANDVSNIKWSGYFNPQILGQVVLRLRNETDNSSGGVLNKFKKDSEISTKKRNSNFISNLLTIKNKQLNVDSSNQQQQQLQQQQQQQQQQQQQQQQQQQQQQQQQQSINQQTSLNSSSSSTITSTNSTVIFEDLRVFINVTIRVKSSKSLTTTMIILNEQNPELPPYRINNKTRFPLWIRQKKTEIWDKVQPKTSIPYAWDHPILPKKLIIEFPTGLTKTYRLGNLEENSIVSIKNPNSSGGYDRVDFQISIIANGPTRVLNIKERDLNGDTNNNTISPQLNSIETFGITNDPNNPNNPNNNPNNNDKLNVKYEFSIDLSNIGISIINKIPTREEIVYLSIDGLKLEVKQSKLDQYIQFKVDDLQIDDQRYSTNFPVFLCQSKKINHSINQQPNQQSSSPQSTNTTTTTTTNTTTTNNTTQQQKLKPFLQFSATRTLKYSNIMFFRYFSILIQEFDINLDEASILNALSFININLNSLNEHFTLHPTITQEEILETKNASNIENHMVYFEMLHINPVKMNLSFISCKSPKETQAILGARSLAELLIGFKSNSPFLNIERAPIKFNGFIWEHPFLSTRQVIDEISLHFSYQMMSQAHKIFGSFDFIGNPIRLAESLGSGFKDFFHEPALGLVKSPQDFAAGLSKGTSSLINNSVFGFADSTSKITGTISKGLVQLSLDDSYIKERQESNKQKPKGVKEGLEFGFRDFGEGVIKGITGIIDEPYKGATQEKSWEGFFKGIGKGVLGVAVKPTVGVFDLVSKTSEGIKNSTTVAKSLSQIKRRRIPRYFPREGTLSTYNQFKSIGSFILYSKIGPPPTHDWYVFHTILNYKDLILIGSNYHLLLIRCANLSINGNLSDSEIIWKVKFSEIIQIKNIPSNFGFQLFVNVNGVGQPPITLLIPTLTEEVRNSVVRKITDLILLEKRFGNNLD.

Residues 4-112 (HIAASVLTKY…KFQDEKQAKL (109 aa)) form the Chorein N-terminal domain. 12 disordered regions span residues 243–268 (IKKE…DEIE), 450–481 (LKLQ…TGGG), 966–985 (QQLQ…SPPL), 1174–1219 (KNNQ…NNNS), 1326–1345 (ERKL…GVST), 1907–1926 (ENIN…TTTT), 2024–2047 (DDYN…NQLP), 2209–2290 (IKPA…NKNL), 2330–2353 (FNPK…SPLL), 2509–2541 (KQLN…NLLG), 3209–3228 (GITN…NNND), and 3310–3342 (INQQ…NTTQ). 2 stretches are compositionally biased toward low complexity: residues 251–260 (QQQQQQQQQG) and 452–477 (LQQQ…PSTS). Low complexity predominate over residues 1175–1190 (NNQNNNQNNNQNNNQN). Residues 1191-1200 (INESSPTVFI) show a composition bias toward polar residues. A compositionally biased stretch (pro residues) spans 1202 to 1211 (SPPPPPPPPL). Low complexity predominate over residues 1333 to 1345 (TSPTTPSSSGVST). Composition is skewed to low complexity over residues 2029–2044 (DNYN…NSNN), 2217–2289 (NNNN…NNKN), and 2335–2353 (SSSS…SPLL). 2 stretches are compositionally biased toward low complexity: residues 3212–3228 (NDPN…NNND) and 3311–3342 (NQQP…NTTQ).

Belongs to the VPS13 family.

It localises to the membrane. Mediates the transfer of lipids between membranes at organelle contact sites. In Dictyostelium discoideum (Social amoeba), this protein is Intermembrane lipid transfer protein tipC (tipC).